A 221-amino-acid chain; its full sequence is Iron-sulfur cluster repair protein YtfE (221 aa).

The protein belongs to the RIC family. YtfE subfamily. As to quaternary structure, homodimer.

It is found in the cytoplasm. In terms of biological role, di-iron-containing protein involved in the repair of iron-sulfur clusters damaged by oxidative and nitrosative stress conditions. This Cronobacter sakazakii (strain ATCC BAA-894) (Enterobacter sakazakii) protein is Iron-sulfur cluster repair protein YtfE.